The chain runs to 372 residues: tRNA pseudouridine synthase D (372 aa).

The active-site Nucleophile is Asp85. One can recognise a TRUD domain in the interval 160 to 330 (GFTNYFGYQR…MQGSRRFMWG (171 aa)).

It belongs to the pseudouridine synthase TruD family.

It catalyses the reaction uridine(13) in tRNA = pseudouridine(13) in tRNA. In terms of biological role, responsible for synthesis of pseudouridine from uracil-13 in transfer RNAs. This chain is tRNA pseudouridine synthase D, found in Campylobacter jejuni (strain RM1221).